We begin with the raw amino-acid sequence, 790 residues long: Probable quinate dehydrogenase (quinone) (790 aa).

4 consecutive transmembrane segments (helical) span residues 22–42, 48–68, 77–94, and 106–126; these read GSWYFLLMGLATALAGVLIVL, ALVYGVAFALTLVWALWDAGL, LMLPAAFAVLVALAWPAL, and AYGVATVLALAVVAGIGGMFV. The tract at residues 171–200 is disordered; sequence RSNGRPAAGSPGPTTPGEIANSDGNGAEDQ. Positions 174–187 are enriched in low complexity; the sequence is GRPAAGSPGPTTPG.

It belongs to the bacterial PQQ dehydrogenase family. It depends on pyrroloquinoline quinone as a cofactor.

It is found in the cell membrane. The catalysed reaction is L-quinate + a quinone = 3-dehydroquinate + a quinol. It participates in aromatic compound metabolism; 3,4-dihydroxybenzoate biosynthesis; 3-dehydroquinate from D-quinate (PQQ route): step 1/1. This is Probable quinate dehydrogenase (quinone) (qumA) from Xanthomonas campestris pv. juglandis (Xanthomonas arboricola pv. juglandis).